We begin with the raw amino-acid sequence, 115 residues long: Kunitz-type trypsin inhibitor 1 (115 aa).

Belongs to the protease inhibitor I3 (leguminous Kunitz-type inhibitor) family.

In terms of biological role, exhibits Kunitz trypsin protease inhibitor activity. The chain is Kunitz-type trypsin inhibitor 1 from Selenicereus undatus (Pitahaya).